Here is an 848-residue protein sequence, read N- to C-terminus: Coiled-coil domain-containing protein 110 (848 aa).

The segment at 41 to 62 is disordered; sequence SEGVKESGGNEPEYGCASEPEN. Residues 442-794 adopt a coiled-coil conformation; it reads LQNYLKESLQ…LSDKVSSQNN (353 aa). Ser620 carries the post-translational modification Phosphoserine.

It localises to the nucleus. This is Coiled-coil domain-containing protein 110 (Ccdc110) from Mus musculus (Mouse).